The following is a 226-amino-acid chain: Enolase-phosphatase E1 (226 aa).

Belongs to the HAD-like hydrolase superfamily. MasA/MtnC family. In terms of assembly, monomer. It depends on Mg(2+) as a cofactor.

The enzyme catalyses 5-methylsulfanyl-2,3-dioxopentyl phosphate + H2O = 1,2-dihydroxy-5-(methylsulfanyl)pent-1-en-3-one + phosphate. It functions in the pathway amino-acid biosynthesis; L-methionine biosynthesis via salvage pathway; L-methionine from S-methyl-5-thio-alpha-D-ribose 1-phosphate: step 3/6. The protein operates within amino-acid biosynthesis; L-methionine biosynthesis via salvage pathway; L-methionine from S-methyl-5-thio-alpha-D-ribose 1-phosphate: step 4/6. Bifunctional enzyme that catalyzes the enolization of 2,3-diketo-5-methylthiopentyl-1-phosphate (DK-MTP-1-P) into the intermediate 2-hydroxy-3-keto-5-methylthiopentenyl-1-phosphate (HK-MTPenyl-1-P), which is then dephosphorylated to form the acireductone 1,2-dihydroxy-3-keto-5-methylthiopentene (DHK-MTPene). The polypeptide is Enolase-phosphatase E1 (Shewanella putrefaciens (strain CN-32 / ATCC BAA-453)).